The sequence spans 2193 residues: Non-reducing polyketide synthase esdpA (2193 aa).

Positions 90–252 (NVLLAPLTVL…AKVQVNGRYH (163 aa)) constitute a Starter acyltransferase (SAT) domain. In terms of domain architecture, Ketosynthase family 3 (KS3) spans 381 to 797 (DECVAIVGAA…GNNTVIIVCE (417 aa)). Active-site for beta-ketoacyl synthase activity residues include Cys-546, His-682, and His-720. Residues 906 to 1158 (VFSGQSGMTV…YFVDAVRRIK (253 aa)) enclose the Malonyl-CoA:ACP transacylase (MAT) domain. Ser-992 (for acyl/malonyl transferase activity) is an active-site residue. The interval 1265–1392 (PPMLSLENFS…GRVVLEDRRR (128 aa)) is N-terminal hotdog fold. Residues 1265–1569 (PPMLSLENFS…FVKISSHILQ (305 aa)) enclose the PKS/mFAS DH domain. The segment at 1419-1569 (VFSASGSIAY…FVKISSHILQ (151 aa)) is C-terminal hotdog fold. The active-site Proton donor; for dehydratase activity is the Asp-1479. The region spanning 1723-1799 (RILSDSMIKL…ELHDLMQSHP (77 aa)) is the Carrier domain. Ser-1759 is modified (O-(pantetheine 4'-phosphoryl)serine). The interval 1944–2177 (YHGSEHKLLR…GFTHVDWSND (234 aa)) is methyltransferase (CMeT) domain.

The cofactor is pantetheine 4'-phosphate.

It participates in secondary metabolite biosynthesis; terpenoid biosynthesis. In terms of biological role, non-reducing polyketide synthase; part of the cluster that mediates the biosynthesis of shearones, diterpenoid pyrones (DPs) which are structurally diverse meroterpenoids consisting of a diterpene linked by a pyrone, and which may exhibit a range of bioactivities. Whitin the pathway, esdpA takes part to the biosynthesis of the molecular scaffold via the production of the alpha-pyrone from one molecule of acetyl-CoA, two molecules of malonyl-CoA and one molecule of S-adenosyl-L-methionine (SAM). The molecular scaffold is commonly biosynthesized by a series of enzymes including the non-reducing polyketide synthase (NR-PKS) esdpA that generates an alpha-pyrone; the prenyltransferase esdpC that attaches a geranylgeranyl pyrophosphate (GGPP) produced by the GGPP synthase (GGPPS) esdpD onto the pyrone unit; the FAD-dependent monooxygenase esdpE that converts an olefin on the diterpene unit into an epoxide; and the terpene cyclase esdpB that catalyzes the cyclization reactions to give the molecular backbone shearone A. In the modification steps, esdpF oxidizes the hydroxy group to a ketone at C-3 and esdpG then attaches hydroxy groups at both C-11 and C-12. After that, esdpI hydroxylates at C-20 and esdpH hydroxylates at C-6'. The ether bridge is generated by nucleophilic attack of the hydroxy group at C-20 to the carbonyl carbon at C-3. EsdpH can also functions prior to esdpI. The different combinations of these modification enzymes lead to the production of diverse shearone derivatives, shearone I being the end product of the pathway. The alpha-ketoglutarate-dependent dioxygenase esdpJ seems not to be involved in this pathway. The protein is Non-reducing polyketide synthase esdpA of Penicillium shearii (Eupenicillium shearii).